We begin with the raw amino-acid sequence, 37 residues long: MVEPLLSGVVLGLILVTLSGLFFAAYQQYKRGNQLNG.

A helical membrane pass occupies residues 5-25 (LLSGVVLGLILVTLSGLFFAA).

This sequence belongs to the PetG family. In terms of assembly, the 4 large subunits of the cytochrome b6-f complex are cytochrome b6, subunit IV (17 kDa polypeptide, PetD), cytochrome f and the Rieske protein, while the 4 small subunits are PetG, PetL, PetM and PetN. The complex functions as a dimer.

The protein resides in the cellular thylakoid membrane. Component of the cytochrome b6-f complex, which mediates electron transfer between photosystem II (PSII) and photosystem I (PSI), cyclic electron flow around PSI, and state transitions. PetG is required for either the stability or assembly of the cytochrome b6-f complex. The sequence is that of Cytochrome b6-f complex subunit 5 from Trichodesmium erythraeum (strain IMS101).